A 213-amino-acid chain; its full sequence is Transmembrane emp24 domain-containing protein p24delta8 (213 aa).

An N-terminal signal peptide occupies residues 1 to 22 (MDLCRSSILLLIIALLSPRTLS). The Lumenal segment spans residues 23 to 180 (MRYELKSSKT…QELNRSTNSK (158 aa)). In terms of domain architecture, GOLD spans 32 to 148 (TKCIGEEIHE…VDMMEYQVKT (117 aa)). Asparagine 97 carries N-linked (GlcNAc...) asparagine glycosylation. The stretch at 163–176 (LREREEEMQELNRS) forms a coiled coil. Arginine 166 is modified (omega-N-methylated arginine). The N-linked (GlcNAc...) asparagine glycan is linked to asparagine 174. The chain crosses the membrane as a helical span at residues 181–203 (MAWLSFGSLVVCLSVAGLQFWHL). The tract at residues 202-213 (HLKTFFEKKKLI) is interaction with ARF1. The Cytoplasmic segment spans residues 204–213 (KTFFEKKKLI). The COPII vesicle coat-binding motif lies at 206–207 (FF). The short motif at 206–213 (FFEKKKLI) is the COPI vesicle coat-binding element.

This sequence belongs to the EMP24/GP25L family. As to quaternary structure, probably oligomerizes with other members of the EMP24/GP25L family. Associates with the COPI vesicle coat (coatomer). Associates with the COPII vesicle coat (coatomer). Interacts with ARF1 (GDP-bound).

The protein localises to the endoplasmic reticulum membrane. It is found in the golgi apparatus. Its subcellular location is the cis-Golgi network membrane. It localises to the golgi stack membrane. Functionally, involved in vesicular protein trafficking. Mainly functions in the early secretory pathway. Thought to act as cargo receptor at the lumenal side for incorporation of secretory cargo molecules into transport vesicles and to be involved in vesicle coat formation at the cytoplasmic side. On Golgi membranes, acts as a primary receptor for ARF1-GDP which is involved in COPI-vesicle formation. This is Transmembrane emp24 domain-containing protein p24delta8 from Arabidopsis thaliana (Mouse-ear cress).